The chain runs to 140 residues: Nucleoside diphosphate kinase (140 aa).

ATP is bound by residues K11, F59, R87, T93, R104, and N114. H117 serves as the catalytic Pros-phosphohistidine intermediate.

It belongs to the NDK family. As to quaternary structure, homotetramer. The cofactor is Mg(2+).

Its subcellular location is the cytoplasm. The catalysed reaction is a 2'-deoxyribonucleoside 5'-diphosphate + ATP = a 2'-deoxyribonucleoside 5'-triphosphate + ADP. It catalyses the reaction a ribonucleoside 5'-diphosphate + ATP = a ribonucleoside 5'-triphosphate + ADP. In terms of biological role, major role in the synthesis of nucleoside triphosphates other than ATP. The ATP gamma phosphate is transferred to the NDP beta phosphate via a ping-pong mechanism, using a phosphorylated active-site intermediate. The sequence is that of Nucleoside diphosphate kinase from Ruegeria sp. (strain TM1040) (Silicibacter sp.).